The sequence spans 599 residues: DNA-directed RNA polymerase III subunit RPC3 (599 aa).

A disordered region spans residues 335–371 (PRLDGLRPRGKGSRSVSPRPQSKRVKTEEGYTKTGDY). Residues 359-371 (VKTEEGYTKTGDY) are compositionally biased toward basic and acidic residues. The tract at residues 526 to 547 (IYKSLSRCFERVAAERAKLPIL) is leucine-zipper.

The protein belongs to the RNA polymerase beta chain family. In terms of assembly, component of the RNA polymerase III (Pol III) complex consisting of 17 subunits.

The protein resides in the nucleus. DNA-dependent RNA polymerase catalyzes the transcription of DNA into RNA using the four ribonucleoside triphosphates as substrates. Specific core component of RNA polymerase III which synthesizes small RNAs, such as 5S rRNA and tRNAs. In Yarrowia lipolytica (strain CLIB 122 / E 150) (Yeast), this protein is DNA-directed RNA polymerase III subunit RPC3 (RPC82).